Consider the following 335-residue polypeptide: N-acetylmuramoyl-L-alanine amidase sle1 (335 aa).

A signal peptide spans 1 to 25 (MQKKVIAAIIGTSAISAVAATQANA). In terms of domain architecture, LysM 1 spans 27 to 70 (TTHTVKPGESVWAISNKYGISIAKLKSLNNLTSNLIFPNQVLKV). Residues 71-86 (SGSSNSTSNSSRPSTN) are compositionally biased toward low complexity. The segment at 71 to 90 (SGSSNSTSNSSRPSTNSGGG) is disordered. LysM domains lie at 91–134 (SYYT…KLKV) and 158–201 (SYYT…KLKV). The 125-residue stretch at 211–335 (ASATTTNRGY…YQVNNYRYIH (125 aa)) folds into the Peptidase C51 domain.

The protein localises to the secreted. It localises to the cell surface. It carries out the reaction Hydrolyzes the link between N-acetylmuramoyl residues and L-amino acid residues in certain cell-wall glycopeptides.. Peptidoglycan hydrolase involved in the splitting of the septum during cell division. In Staphylococcus aureus (strain bovine RF122 / ET3-1), this protein is N-acetylmuramoyl-L-alanine amidase sle1 (sle1).